A 547-amino-acid polypeptide reads, in one-letter code: Probable pectinesterase/pectinesterase inhibitor 12 (547 aa).

An N-terminal signal peptide occupies residues 1-23 (MALSSFNLSSLLFLLFFTPSVFS). The interval 31 to 185 (NPHETSATSF…YKHISNSLSA (155 aa)) is pectinesterase inhibitor 12. N-linked (GlcNAc...) asparagine glycosylation is found at Asn131, Asn247, Asn260, and Asn303. The pectinesterase 12 stretch occupies residues 237 to 533 (SLVVAADGTG…FTATEFITGD (297 aa)). Residues Thr312 and Gln342 each contribute to the substrate site. Asp365 (proton donor; for pectinesterase activity) is an active-site residue. An intrachain disulfide couples Cys379 to Cys399. Asp386 functions as the Nucleophile; for pectinesterase activity in the catalytic mechanism. Residues Asn432 and Asn443 are each glycosylated (N-linked (GlcNAc...) asparagine). Positions 454 and 456 each coordinate substrate. A glycan (N-linked (GlcNAc...) asparagine) is linked at Asn523.

The protein in the N-terminal section; belongs to the PMEI family. It in the C-terminal section; belongs to the pectinesterase family. In terms of tissue distribution, expressed in siliques.

It is found in the secreted. It localises to the cell wall. The catalysed reaction is [(1-&gt;4)-alpha-D-galacturonosyl methyl ester](n) + n H2O = [(1-&gt;4)-alpha-D-galacturonosyl](n) + n methanol + n H(+). It participates in glycan metabolism; pectin degradation; 2-dehydro-3-deoxy-D-gluconate from pectin: step 1/5. In terms of biological role, acts in the modification of cell walls via demethylesterification of cell wall pectin. The protein is Probable pectinesterase/pectinesterase inhibitor 12 (PME12) of Arabidopsis thaliana (Mouse-ear cress).